The following is a 560-amino-acid chain: CTP synthase (560 aa).

The amidoligase domain stretch occupies residues 1–272; the sequence is MSIGDVCSAR…DTQILSHFGM (272 aa). Residue Ser-20 participates in CTP binding. Residue Ser-20 coordinates UTP. ATP-binding positions include 21 to 26 and Asp-78; that span reads SLGKGL. Asp-78 and Glu-146 together coordinate Mg(2+). CTP is bound by residues 153 to 155, 193 to 198, and Lys-229; these read DIE and KTKPTQ. UTP is bound by residues 193–198 and Lys-229; that span reads KTKPTQ. A Glutamine amidotransferase type-1 domain is found at 297–539; that stretch reads TIAIIGKYTK…VQNVLQIKQR (243 aa). Position 356 (Gly-356) interacts with L-glutamine. The active-site Nucleophile; for glutamine hydrolysis is the Cys-383. L-glutamine contacts are provided by residues 384–387, Glu-407, and Arg-467; that span reads MGMQ. Active-site residues include His-512 and Glu-514.

Belongs to the CTP synthase family. Homotetramer.

It carries out the reaction UTP + L-glutamine + ATP + H2O = CTP + L-glutamate + ADP + phosphate + 2 H(+). The enzyme catalyses L-glutamine + H2O = L-glutamate + NH4(+). The catalysed reaction is UTP + NH4(+) + ATP = CTP + ADP + phosphate + 2 H(+). It participates in pyrimidine metabolism; CTP biosynthesis via de novo pathway; CTP from UDP: step 2/2. With respect to regulation, allosterically activated by GTP, when glutamine is the substrate; GTP has no effect on the reaction when ammonia is the substrate. The allosteric effector GTP functions by stabilizing the protein conformation that binds the tetrahedral intermediate(s) formed during glutamine hydrolysis. Inhibited by the product CTP, via allosteric rather than competitive inhibition. Functionally, catalyzes the ATP-dependent amination of UTP to CTP with either L-glutamine or ammonia as the source of nitrogen. Regulates intracellular CTP levels through interactions with the four ribonucleotide triphosphates. In Anaplasma marginale (strain Florida), this protein is CTP synthase.